A 151-amino-acid chain; its full sequence is Myosin catalytic light chain, smooth muscle (151 aa).

At Ala-1 the chain carries N-acetylalanine. EF-hand domains are found at residues 6 to 41 (DRIT…LGQN), 83 to 118 (GSYE…LGEK), and 119 to 151 (MSEE…LLEG).

Functionally, in molluscan muscle, calcium regulation is associated with myosin rather than with actin. Muscle myosin contains two types of light chains: the catalytic light chain, essential for ATPase activity, and the regulatory light chain, a calcium-binding protein responsible for Ca(2+) dependent binding and Ca(2+) dependent Mg-ATPase activity. The protein is Myosin catalytic light chain, smooth muscle of Halocynthia roretzi (Sea squirt).